A 496-amino-acid polypeptide reads, in one-letter code: UDP-N-acetylmuramoyl-L-alanyl-D-glutamate--2,6-diaminopimelate ligase (496 aa).

Residue Ser32 coordinates UDP-N-acetyl-alpha-D-muramoyl-L-alanyl-D-glutamate. 116–122 (GTNGKTT) is a binding site for ATP. UDP-N-acetyl-alpha-D-muramoyl-L-alanyl-D-glutamate contacts are provided by residues 158 to 159 (TT), Ser185, Gln191, and Arg193. N6-carboxylysine is present on Lys225. Residues Arg389, 413–416 (DNPR), Gly464, and Glu468 contribute to the meso-2,6-diaminopimelate site. The Meso-diaminopimelate recognition motif motif lies at 413 to 416 (DNPR).

This sequence belongs to the MurCDEF family. MurE subfamily. It depends on Mg(2+) as a cofactor. Carboxylation is probably crucial for Mg(2+) binding and, consequently, for the gamma-phosphate positioning of ATP.

It is found in the cytoplasm. It catalyses the reaction UDP-N-acetyl-alpha-D-muramoyl-L-alanyl-D-glutamate + meso-2,6-diaminopimelate + ATP = UDP-N-acetyl-alpha-D-muramoyl-L-alanyl-gamma-D-glutamyl-meso-2,6-diaminopimelate + ADP + phosphate + H(+). It functions in the pathway cell wall biogenesis; peptidoglycan biosynthesis. In terms of biological role, catalyzes the addition of meso-diaminopimelic acid to the nucleotide precursor UDP-N-acetylmuramoyl-L-alanyl-D-glutamate (UMAG) in the biosynthesis of bacterial cell-wall peptidoglycan. This chain is UDP-N-acetylmuramoyl-L-alanyl-D-glutamate--2,6-diaminopimelate ligase, found in Trichormus variabilis (strain ATCC 29413 / PCC 7937) (Anabaena variabilis).